Reading from the N-terminus, the 437-residue chain is Ribosomal protein uS12 methylthiotransferase RimO (437 aa).

In terms of domain architecture, MTTase N-terminal spans 9–125 (PAIFLLSLGC…VLAAIGAHYC (117 aa)). Cysteine 18, cysteine 54, cysteine 88, cysteine 149, cysteine 153, and cysteine 156 together coordinate [4Fe-4S] cluster. The Radical SAM core domain maps to 135-364 (LTPPHYAFLK…MELQESIAAS (230 aa)). In terms of domain architecture, TRAM spans 367–434 (RKLEGQTLTV…AYELFGRVGS (68 aa)).

This sequence belongs to the methylthiotransferase family. RimO subfamily. It depends on [4Fe-4S] cluster as a cofactor.

The protein localises to the cytoplasm. It catalyses the reaction L-aspartate(89)-[ribosomal protein uS12]-hydrogen + (sulfur carrier)-SH + AH2 + 2 S-adenosyl-L-methionine = 3-methylsulfanyl-L-aspartate(89)-[ribosomal protein uS12]-hydrogen + (sulfur carrier)-H + 5'-deoxyadenosine + L-methionine + A + S-adenosyl-L-homocysteine + 2 H(+). In terms of biological role, catalyzes the methylthiolation of an aspartic acid residue of ribosomal protein uS12. The protein is Ribosomal protein uS12 methylthiotransferase RimO of Chlorobaculum parvum (strain DSM 263 / NCIMB 8327) (Chlorobium vibrioforme subsp. thiosulfatophilum).